A 202-amino-acid chain; its full sequence is Dephospho-CoA kinase (202 aa).

Positions 6–202 constitute a DPCK domain; the sequence is KISVTGDPSS…QCFKALKGTI (197 aa). 14–19 lines the ATP pocket; that stretch reads SSGKTE.

Belongs to the CoaE family.

Its subcellular location is the cytoplasm. It catalyses the reaction 3'-dephospho-CoA + ATP = ADP + CoA + H(+). It participates in cofactor biosynthesis; coenzyme A biosynthesis; CoA from (R)-pantothenate: step 5/5. In terms of biological role, catalyzes the phosphorylation of the 3'-hydroxyl group of dephosphocoenzyme A to form coenzyme A. The chain is Dephospho-CoA kinase from Chlamydia trachomatis serovar A (strain ATCC VR-571B / DSM 19440 / HAR-13).